The chain runs to 1009 residues: DNA ligase 3 (1009 aa).

The transit peptide at 1-42 directs the protein to the mitochondrion; sequence MSLAFKIFFPQTLRALSRKELCLFRKHHWRDVRQFSQWSETD. The segment at 93–185 adopts a PARP-type zinc-finger fold; it reads FCVDYAKRGT…QITQHIADLS (93 aa). Residues cysteine 105, cysteine 108, histidine 139, and cysteine 142 each coordinate Zn(2+). Phosphoserine occurs at positions 210, 216, 227, and 242. Residues 224-256 are disordered; that stretch reads RKFSGFSAKPNNSGEAPSSPTPKRSLSSSKCDP. Low complexity predominate over residues 240-252; sequence PSSPTPKRSLSSS. Interaction with DNA regions lie at residues 277-280, 318-323, 388-391, and 421-427; these read PSYN, VYNLND, TKED, and KMNSGAK. Residue glutamate 506 coordinates ATP. Catalysis depends on lysine 508, which acts as the N6-AMP-lysine intermediate. Residues arginine 513 and arginine 528 each coordinate ATP. Mg(2+)-binding residues include glutamate 560 and glutamate 655. Residues lysine 660, arginine 671, and lysine 675 each coordinate ATP. The interval 842 to 917 is disordered; sequence AGDEGSSTTG…LATKSSPVKV (76 aa). Low complexity-rich tracts occupy residues 845-854 and 863-877; these read EGSSTTGGSS and SAVS…SAST. The span at 884-898 shows a compositional bias: polar residues; the sequence is LSNSNSKDGNMQTAK. At serine 913 the chain carries Phosphoserine. One can recognise a BRCT domain in the interval 933-1009; the sequence is VLLDIFTGVR…IRKRRLVAPC (77 aa).

This sequence belongs to the ATP-dependent DNA ligase family. In terms of assembly, isoform 3 interacts (via BRCT domain) with the nuclear DNA-repair protein XRCC1. Interacts with POLG. Interacts with POLB. Mg(2+) serves as cofactor. As to expression, testis, thymus, prostate and heart.

Its subcellular location is the mitochondrion. The protein localises to the nucleus. The enzyme catalyses ATP + (deoxyribonucleotide)n-3'-hydroxyl + 5'-phospho-(deoxyribonucleotide)m = (deoxyribonucleotide)n+m + AMP + diphosphate.. Functionally, isoform 3 functions as a heterodimer with DNA-repair protein XRCC1 in the nucleus and can correct defective DNA strand-break repair and sister chromatid exchange following treatment with ionizing radiation and alkylating agents. Isoform 1 is targeted to mitochondria, where it functions as a DNA ligase in mitochondrial base-excision DNA repair. The sequence is that of DNA ligase 3 (LIG3) from Homo sapiens (Human).